The following is a 1253-amino-acid chain: Structural polyprotein (1253 aa).

A host transcription inhibition region spans residues 43–77; that stretch reads VQAQQMQQLISAVSALTTKQNGKAPKKPKKKPQKA. The disordered stretch occupies residues 58–110; it reads LTTKQNGKAPKKPKKKPQKAKAKKNEQQKKNENKKPPPKQKNPAKKKKPGKRE. The span at 66–79 shows a compositional bias: basic residues; that stretch reads APKKPKKKPQKAKA. The Nuclear localization signal signature appears at 70–106; sequence PKKKPQKAKAKKNEQQKKNENKKPPPKQKNPAKKKKP. Over residues 80 to 92 the composition is skewed to basic and acidic residues; it reads KKNEQQKKNENKK. The segment at 90–121 is binding to the viral RNA; that stretch reads NKKPPPKQKNPAKKKKPGKRERMCMKIENDCI. The segment covering 93-108 has biased composition (basic residues); it reads PPPKQKNPAKKKKPGK. The tract at residues 106 to 120 is ribosome-binding; sequence PGKRERMCMKIENDC. A disulfide bridge connects residues Cys-120 and Cys-135. Residues 120 to 268 form the Peptidase S3 domain; the sequence is CIFEVKLDGK…RYTPEGTEEW (149 aa). Catalysis depends on His-146, which acts as the Charge relay system. Positions 151–161 match the Nuclear export signal motif; sequence IDNPDLAKLTY. An interaction with spike glycoprotein E2 region spans residues 162-167; it reads KKSSKY. The active-site Charge relay system is Asp-168. The interval 190-200 is dimerization of the capsid protein; that stretch reads PEGHYNWHHGA. The active-site Charge relay system is the Ser-220. The segment at 226-230 is dimerization of the capsid protein; it reads DNKGR. Residues 269–280 form a functions as an uncleaved signal peptide for the precursor of protein E3/E2 region; sequence SAALMMCVLANV. Cystine bridges form between Cys-275–Cys-284, Cys-289–Cys-293, and Cys-292–Cys-324. An N-linked (GlcNAc...) asparagine; by host glycan is attached at Asn-279. The N-linked (GlcNAc...) asparagine; by host glycan is linked to Asn-325. Residues 333 to 694 are Extracellular-facing; the sequence is SVTKHFNVYK…EIILYYYGLY (362 aa). Intrachain disulfides connect Cys-351–Cys-457, Cys-354–Cys-360, Cys-423–Cys-437, Cys-485–Cys-597, Cys-533–Cys-557, and Cys-535–Cys-552. Interaction with host Mxra8 receptor stretches follow at residues 358–361 and 394–396; these read QFCY and HEH. The interaction with host Mxra8 receptor stretch occupies residues 516-519; it reads QSGN. Asn-532 is a glycosylation site (N-linked (GlcNAc...) asparagine; by host). Residues 548-554 form an interaction with host Mxra8 receptor region; it reads TINSCKI. An N-linked (GlcNAc...) asparagine; by host glycan is attached at Asn-594. Residues 695-715 form a helical membrane-spanning segment; that stretch reads PAATIAAVSAAGLAVVLSLLA. The Cytoplasmic segment spans residues 716–754; sequence SCYMFATARRKCLTPYALTPGAVVPVTLGVLCCAPRAHA. A lipid anchor (S-stearoyl cysteine; by host) is attached at Cys-717. An interaction with the capsid protein region spans residues 722 to 726; it reads TARRK. Residue Cys-727 is the site of S-stearoyl cysteine; by host attachment. Positions 727 to 747 are transient transmembrane before p62-6K protein processing; that stretch reads CLTPYALTPGAVVPVTLGVLC. A disulfide bond links Cys-727 and Cys-748. 2 S-palmitoyl cysteine; by host lipidation sites follow: Cys-747 and Cys-748. Over 755–769 the chain is Extracellular; the sequence is ASFAESMAYLWDENQ. A glycan (N-linked (GlcNAc...) asparagine; by host) is linked at Asn-768. A helical membrane pass occupies residues 770-790; sequence TLFWLELATPLAAIIILVCCL. Over 791-792 the chain is Cytoplasmic; sequence KN. The helical transmembrane segment at 793–813 threads the bilayer; sequence LLCCCKPLSFLVLVSLGTPVV. Extracellular-facing segments span residues 814 to 815 and 826 to 1227; these read KS and VGFP…WVQR. Cystine bridges form between Cys-864/Cys-929, Cys-877/Cys-909, Cys-878/Cys-911, and Cys-883/Cys-893. The segment at 899–916 is E1 fusion peptide loop; the sequence is VYPFMWGGAYCFCDTENT. 2 N-linked (GlcNAc...) asparagine; by host glycosylation sites follow: Asn-956 and Asn-1085. Intrachain disulfides connect Cys-1074-Cys-1086, Cys-1116-Cys-1191, Cys-1121-Cys-1195, and Cys-1143-Cys-1185. The helical transmembrane segment at 1228 to 1248 threads the bilayer; the sequence is VAGGLGGLTLAAVAVLILVTC. Residue Cys-1248 is the site of S-palmitoyl cysteine; by host attachment. The Cytoplasmic segment spans residues 1249-1253; it reads VTMRR.

In terms of assembly, homodimer. Homomultimer. Interacts with host karyopherin KPNA4; this interaction allows the nuclear import of the viral capsid protein. Interacts with spike glycoprotein E2. Interacts with host IRAK1; the interaction leads to inhibition of IRAK1-dependent signaling. As to quaternary structure, the precursor of protein E3/E2 and E1 form a heterodimer shortly after synthesis. Interacts with spike glycoprotein E2. The precursor of protein E3/E2 and E1 form a heterodimer shortly after synthesis. Processing of the precursor of protein E3/E2 into E2 and E3 results in a heterodimer of the spike glycoproteins E2 and E1. Spike at virion surface are constituted of a trimer of E2-E1 heterodimers. After target cell attachment and endocytosis, E1 change conformation to form homotrimers. Interacts with 6K protein. E1/E2 heterodimer interacts with host LDLR. In terms of assembly, interacts with spike glycoprotein E1. Processing of the precursor of protein E3/E2 into E2 and E3 results in a heterodimer of the spike glycoproteins E2 and E1. Spike at virion surface are constituted of a trimer of E2-E1 heterodimers. Interacts with 6K protein. Interacts with host MXRA8; this interaction mediates virus entry. As to quaternary structure, oligomer. Interacts with spike glycoprotein E1. Interacts with spike glycoprotein E2. Structural polyprotein: Specific enzymatic cleavages in vivo yield mature proteins. Capsid protein is auto-cleaved during polyprotein translation, unmasking a signal peptide at the N-terminus of the precursor of E3/E2. The remaining polyprotein is then targeted to the host endoplasmic reticulum, where host signal peptidase cleaves it into pE2, 6K and E1 proteins. pE2 is further processed to mature E3 and E2 by host furin in trans-Golgi vesicle. In terms of processing, palmitoylated via thioester bonds. These palmitoylations may induce disruption of the C-terminus transmembrane. This would result in the reorientation of E2 C-terminus from lumenal to cytoplasmic side. Post-translationally, N-glycosylated. Palmitoylated via thioester bonds.

It is found in the virion. It localises to the host cytoplasm. The protein resides in the host cell membrane. The protein localises to the host nucleus. Its subcellular location is the virion membrane. It is found in the host Golgi apparatus. It localises to the host trans-Golgi network. The protein resides in the host endoplasmic reticulum. It catalyses the reaction Autocatalytic release of the core protein from the N-terminus of the togavirus structural polyprotein by hydrolysis of a -Trp-|-Ser- bond.. Functionally, forms an icosahedral capsid with a T=4 symmetry composed of 240 copies of the capsid protein surrounded by a lipid membrane through which penetrate 80 spikes composed of trimers of E1-E2 heterodimers. The capsid protein binds to the viral RNA genome at a site adjacent to a ribosome binding site for viral genome translation following genome release. Possesses a protease activity that results in its autocatalytic cleavage from the nascent structural protein. Following its self-cleavage, the capsid protein transiently associates with ribosomes, and within several minutes the protein binds to viral RNA and rapidly assembles into icosahedric core particles. The resulting nucleocapsid eventually associates with the cytoplasmic domain of the spike glycoprotein E2 at the cell membrane, leading to budding and formation of mature virions. In case of infection, new virions attach to target cells and after clathrin-mediated endocytosis their membrane fuses with the host endosomal membrane. This leads to the release of the nucleocapsid into the cytoplasm, followed by an uncoating event necessary for the genomic RNA to become accessible. The uncoating might be triggered by the interaction of capsid proteins with ribosomes. Binding of ribosomes would release the genomic RNA since the same region is genomic RNA-binding and ribosome-binding. Specifically inhibits interleukin-1 receptor-associated kinase 1/IRAK1-dependent signaling during viral entry, representing a means by which the alphaviruses may evade innate immune detection and activation prior to viral gene expression. Its function is as follows. Provides the signal sequence for the translocation of the precursor of protein E3/E2 to the host endoplasmic reticulum. Furin-cleaved E3 remains associated with spike glycoprotein E1 and mediates pH protection of the latter during the transport via the secretory pathway. After virion release from the host cell, the assembly protein E3 is gradually released in the extracellular space. Plays a role in viral attachment to target host cell, by binding to the cell receptor MXRA8. The host LDLR may also act as a cell receptor for viral entry. Synthesized as a p62 precursor which is processed by furin at the cell membrane just before virion budding, giving rise to E2-E1 heterodimer. The p62-E1 heterodimer is stable, whereas E2-E1 is unstable and dissociate at low pH. p62 is processed at the last step, presumably to avoid E1 fusion activation before its final export to cell surface. E2 C-terminus contains a transitory transmembrane that would be disrupted by palmitoylation, resulting in reorientation of the C-terminal tail from lumenal to cytoplasmic side. This step is critical since E2 C-terminus is involved in budding by interacting with capsid proteins. This release of E2 C-terminus in cytoplasm occurs lately in protein export, and precludes premature assembly of particles at the endoplasmic reticulum membrane. In terms of biological role, acts as a viroporin that participates in virus glycoprotein processing and transport to the plasma membrane, cell permeabilization and budding of viral particles. Disrupts the calcium homeostasis of the cell, probably at the endoplasmic reticulum level. This leads to cytoplasmic calcium elevation. Because of its lipophilic properties, the 6K protein is postulated to influence the selection of lipids that interact with the transmembrane domains of the glycoproteins, which, in turn, affects the deformability of the bilayer required for the extreme curvature that occurs as budding proceeds. Present in low amount in virions, about 3% compared to viral glycoproteins. Functionally, class II viral fusion protein. Fusion activity is inactive as long as E1 is bound to E2 in mature virion. After virus attachment to target cell via host MXRA8 and endocytosis, acidification of the endosome induce dissociation of E1/E2 heterodimer and concomitant trimerization of the E1 subunits. This E1 trimer is fusion active, and promotes release of viral nucleocapsid in cytoplasm after endosome and viral membrane fusion. Efficient fusion requires the presence of cholesterol and sphingolipid in the target membrane. This Aedes vexans (Inland floodwater mosquito) protein is Structural polyprotein.